The chain runs to 183 residues: Glutathione-regulated potassium-efflux system ancillary protein KefG (183 aa).

Belongs to the NAD(P)H dehydrogenase (quinone) family. KefG subfamily. In terms of assembly, interacts with KefB.

The protein resides in the cell inner membrane. It catalyses the reaction a quinone + NADH + H(+) = a quinol + NAD(+). The catalysed reaction is a quinone + NADPH + H(+) = a quinol + NADP(+). Its function is as follows. Regulatory subunit of a potassium efflux system that confers protection against electrophiles. Required for full activity of KefB. In Salmonella enteritidis PT4 (strain P125109), this protein is Glutathione-regulated potassium-efflux system ancillary protein KefG.